A 382-amino-acid chain; its full sequence is Succinate--CoA ligase [ADP-forming] subunit beta (382 aa).

Residues 9–240 enclose the ATP-grasp domain; it reads KELFSKYGVK…PRDVSEFEMY (232 aa). ATP contacts are provided by residues Lys-45, 52 to 54, Val-94, and Glu-99; that span reads GRG. Asn-193 and Asp-207 together coordinate Mg(2+). Substrate-binding positions include Asn-260 and 317–319; that span reads GIT.

Belongs to the succinate/malate CoA ligase beta subunit family. Heterotetramer of two alpha and two beta subunits. Mg(2+) is required as a cofactor.

It carries out the reaction succinate + ATP + CoA = succinyl-CoA + ADP + phosphate. The catalysed reaction is GTP + succinate + CoA = succinyl-CoA + GDP + phosphate. It participates in carbohydrate metabolism; tricarboxylic acid cycle; succinate from succinyl-CoA (ligase route): step 1/1. Functionally, succinyl-CoA synthetase functions in the citric acid cycle (TCA), coupling the hydrolysis of succinyl-CoA to the synthesis of either ATP or GTP and thus represents the only step of substrate-level phosphorylation in the TCA. The beta subunit provides nucleotide specificity of the enzyme and binds the substrate succinate, while the binding sites for coenzyme A and phosphate are found in the alpha subunit. This chain is Succinate--CoA ligase [ADP-forming] subunit beta, found in Pyrobaculum arsenaticum (strain DSM 13514 / JCM 11321 / PZ6).